The primary structure comprises 65 residues: Large ribosomal subunit protein bL35 (65 aa).

Residues 1-65 (MQKIKTNRSA…KELKRLLPGM (65 aa)) form a disordered region. 2 stretches are compositionally biased toward basic residues: residues 10–19 (AAKRFKRTKS) and 33–47 (LTKK…LRKS). The segment covering 54–65 (NNKELKRLLPGM) has biased composition (basic and acidic residues).

This sequence belongs to the bacterial ribosomal protein bL35 family.

The protein is Large ribosomal subunit protein bL35 of Desulfosudis oleivorans (strain DSM 6200 / JCM 39069 / Hxd3) (Desulfococcus oleovorans).